We begin with the raw amino-acid sequence, 611 residues long: Dihydroxy-acid dehydratase (611 aa).

Residue D81 coordinates Mg(2+). C122 contributes to the [2Fe-2S] cluster binding site. Mg(2+) contacts are provided by D123 and K124. Position 124 is an N6-carboxylysine (K124). A [2Fe-2S] cluster-binding site is contributed by C195. E491 provides a ligand contact to Mg(2+). Catalysis depends on S517, which acts as the Proton acceptor.

This sequence belongs to the IlvD/Edd family. As to quaternary structure, homodimer. It depends on [2Fe-2S] cluster as a cofactor. Mg(2+) is required as a cofactor.

It carries out the reaction (2R)-2,3-dihydroxy-3-methylbutanoate = 3-methyl-2-oxobutanoate + H2O. It catalyses the reaction (2R,3R)-2,3-dihydroxy-3-methylpentanoate = (S)-3-methyl-2-oxopentanoate + H2O. It participates in amino-acid biosynthesis; L-isoleucine biosynthesis; L-isoleucine from 2-oxobutanoate: step 3/4. Its pathway is amino-acid biosynthesis; L-valine biosynthesis; L-valine from pyruvate: step 3/4. Functions in the biosynthesis of branched-chain amino acids. Catalyzes the dehydration of (2R,3R)-2,3-dihydroxy-3-methylpentanoate (2,3-dihydroxy-3-methylvalerate) into 2-oxo-3-methylpentanoate (2-oxo-3-methylvalerate) and of (2R)-2,3-dihydroxy-3-methylbutanoate (2,3-dihydroxyisovalerate) into 2-oxo-3-methylbutanoate (2-oxoisovalerate), the penultimate precursor to L-isoleucine and L-valine, respectively. The protein is Dihydroxy-acid dehydratase of Brucella anthropi (strain ATCC 49188 / DSM 6882 / CCUG 24695 / JCM 21032 / LMG 3331 / NBRC 15819 / NCTC 12168 / Alc 37) (Ochrobactrum anthropi).